We begin with the raw amino-acid sequence, 338 residues long: 4-hydroxythreonine-4-phosphate dehydrogenase (338 aa).

Substrate contacts are provided by H136 and T137. Residues H173, H218, and H273 each coordinate a divalent metal cation. Substrate is bound by residues K281, N290, and R299.

The protein belongs to the PdxA family. As to quaternary structure, homodimer. It depends on Zn(2+) as a cofactor. Requires Mg(2+) as cofactor. Co(2+) serves as cofactor.

Its subcellular location is the cytoplasm. It catalyses the reaction 4-(phosphooxy)-L-threonine + NAD(+) = 3-amino-2-oxopropyl phosphate + CO2 + NADH. Its pathway is cofactor biosynthesis; pyridoxine 5'-phosphate biosynthesis; pyridoxine 5'-phosphate from D-erythrose 4-phosphate: step 4/5. Catalyzes the NAD(P)-dependent oxidation of 4-(phosphooxy)-L-threonine (HTP) into 2-amino-3-oxo-4-(phosphooxy)butyric acid which spontaneously decarboxylates to form 3-amino-2-oxopropyl phosphate (AHAP). The protein is 4-hydroxythreonine-4-phosphate dehydrogenase of Ralstonia nicotianae (strain ATCC BAA-1114 / GMI1000) (Ralstonia solanacearum).